We begin with the raw amino-acid sequence, 456 residues long: Histidine--tRNA ligase (456 aa).

The span at 1–11 (MTQNENPSAQS) shows a compositional bias: polar residues. Residues 1–22 (MTQNENPSAQSGAKPEDKARPA) form a disordered region.

The protein belongs to the class-II aminoacyl-tRNA synthetase family. Homodimer.

The protein localises to the cytoplasm. The enzyme catalyses tRNA(His) + L-histidine + ATP = L-histidyl-tRNA(His) + AMP + diphosphate + H(+). In Cupriavidus pinatubonensis (strain JMP 134 / LMG 1197) (Cupriavidus necator (strain JMP 134)), this protein is Histidine--tRNA ligase.